The chain runs to 101 residues: Gamma-secretase subunit PEN-2 (101 aa).

Over 1–17 (MNLERVSNEEKLNLCRK) the chain is Cytoplasmic. An intramembrane region (helical) is located at residues 18 to 36 (YYLGGFAFLPFLWLVNIFW). The Cytoplasmic segment spans residues 37 to 57 (FFREAFLAPAYTEQSQIKGYV). Residues 58–78 (WRSAVGFLFWVIILATWITIF) traverse the membrane as a helical segment. Residues 79 to 101 (QIYRPRWGALGDYLSFTIPLGTP) are Lumenal-facing.

It belongs to the PEN-2 family. In terms of assembly, the functional gamma-secretase complex is composed of at least four polypeptides: a presenilin homodimer (PSEN1 or PSEN2), nicastrin (NCSTN), APH1 (APH1A or APH1B) and PSENEN.

Its subcellular location is the endoplasmic reticulum membrane. The protein localises to the golgi apparatus. It is found in the golgi stack membrane. It localises to the cell membrane. The protein resides in the membrane. Its function is as follows. Essential subunit of the gamma-secretase complex, an endoprotease complex that catalyzes the intramembrane cleavage of integral membrane proteins such as Notch receptors and APP (amyloid-beta precursor protein). The gamma-secretase complex plays a role in Notch and Wnt signaling cascades and regulation of downstream processes via its role in processing key regulatory proteins, and by regulating cytosolic CTNNB1 levels. PSENEN modulates both endoproteolysis of presenilin and gamma-secretase activity. The polypeptide is Gamma-secretase subunit PEN-2 (Psenen) (Mus musculus (Mouse)).